The following is a 373-amino-acid chain: RNA 3'-terminal phosphate cyclase-like protein (373 aa).

It belongs to the RNA 3'-terminal cyclase family. Type 2 subfamily. As to quaternary structure, part of the small subunit (SSU) processome, composed of more than 70 proteins and the RNA chaperone small nucleolar RNA (snoRNA) U3. Interacts with BMS1.

The protein resides in the nucleus. It localises to the nucleolus. In terms of biological role, as part of the small subunit (SSU) processome, it plays a role in 40S-ribosomal-subunit biogenesis in the early pre-rRNA processing steps at sites A0, A1 and A2 that are required for proper maturation of the 18S RNA. Activates BMS1 by promoting GDP/GTP exchange. Does not have cyclase activity. This Bos taurus (Bovine) protein is RNA 3'-terminal phosphate cyclase-like protein (RCL1).